A 213-amino-acid polypeptide reads, in one-letter code: Small ribosomal subunit protein uS5 (213 aa).

An S5 DRBM domain is found at 54-117; sequence LKSETVDVRL…RNAKLNIIPV (64 aa).

The protein belongs to the universal ribosomal protein uS5 family. In terms of assembly, part of the 30S ribosomal subunit. Contacts protein S4.

Functionally, with S4 and S12 plays an important role in translational accuracy. This chain is Small ribosomal subunit protein uS5, found in Hyperthermus butylicus (strain DSM 5456 / JCM 9403 / PLM1-5).